The following is a 373-amino-acid chain: Zinc finger CCCH domain-containing protein 15 homolog (373 aa).

A disordered region spans residues 1–27 (MPPKQAQSKKTVEKEKKKKVEDKTFGL). Residues 10–25 (KTVEKEKKKKVEDKTF) are compositionally biased toward basic and acidic residues. 2 C3H1-type zinc fingers span residues 95-123 (DPKSIVCEYFKQGVTCPKGNRCKFAHDLA) and 167-205 (KPTAIICKFFLDAIESKKYGWFWECPNGGEKCAYQHCLP). Positions 252–326 (KEEKRLQKEK…ALANQINTSL (75 aa)) form a coiled coil. The tract at residues 325–373 (SLFTDGGVLPSDDDDDDDDDDDDDEDGDDEEEDDDEEEGEYEEEEASDE) is disordered. Residues 335-373 (SDDDDDDDDDDDDDEDGDDEEEDDDEEEGEYEEEEASDE) are compositionally biased toward acidic residues.

Belongs to the ZC3H15/TMA46 family.

In Dictyostelium discoideum (Social amoeba), this protein is Zinc finger CCCH domain-containing protein 15 homolog.